The following is a 613-amino-acid chain: Autophagy-related protein 22-2 (613 aa).

The disordered stretch occupies residues methionine 1 to alanine 28. A helical membrane pass occupies residues tyrosine 41–leucine 61. Residues glycine 80–threonine 96 show a composition bias toward polar residues. The tract at residues glycine 80–arginine 99 is disordered. Asparagine 90 carries an N-linked (GlcNAc...) asparagine glycan. 3 helical membrane-spanning segments follow: residues serine 120–phenylalanine 140, leucine 155–isoleucine 177, and cysteine 189–proline 209. The segment at lysine 216 to threonine 257 is disordered. The N-linked (GlcNAc...) asparagine glycan is linked to asparagine 226. Residues alanine 232–threonine 250 show a composition bias toward basic and acidic residues. The next 4 helical transmembrane spans lie at valine 278 to alanine 298, isoleucine 307 to phenylalanine 327, valine 382 to threonine 402, and valine 418 to valine 438. Residue asparagine 448 is glycosylated (N-linked (GlcNAc...) asparagine). Transmembrane regions (helical) follow at residues leucine 453–phenylalanine 473, phenylalanine 488–glycine 510, tyrosine 522–isoleucine 544, and glycine 553–alanine 573. Residues glycine 592–isoleucine 613 are disordered.

It belongs to the ATG22 family.

It localises to the vacuole membrane. Functionally, vacuolar effluxer which mediate the efflux of amino acids resulting from autophagic degradation. The release of autophagic amino acids allows the maintenance of protein synthesis and viability during nitrogen starvation. The polypeptide is Autophagy-related protein 22-2 (atg22-2) (Neosartorya fischeri (strain ATCC 1020 / DSM 3700 / CBS 544.65 / FGSC A1164 / JCM 1740 / NRRL 181 / WB 181) (Aspergillus fischerianus)).